The following is a 585-amino-acid chain: Arginine--tRNA ligase (585 aa).

Positions 131 to 141 (ANPTGPMHVGH) match the 'HIGH' region motif.

This sequence belongs to the class-I aminoacyl-tRNA synthetase family. In terms of assembly, monomer.

It is found in the cytoplasm. The enzyme catalyses tRNA(Arg) + L-arginine + ATP = L-arginyl-tRNA(Arg) + AMP + diphosphate. This Rhizobium etli (strain ATCC 51251 / DSM 11541 / JCM 21823 / NBRC 15573 / CFN 42) protein is Arginine--tRNA ligase.